The following is a 176-amino-acid chain: Centromere protein R (176 aa).

A Glycyl lysine isopeptide (Lys-Gly) (interchain with G-Cter in SUMO2) cross-link involves residue K8. S17 carries the post-translational modification Phosphoserine. Residues 20–50 are DD1; sequence PSKIMRKKSITAFSPTTGTYQLSPFSSPRTP. K22 participates in a covalent cross-link: Glycyl lysine isopeptide (Lys-Gly) (interchain with G-Cter in SUMO2). Residue S28 is modified to Phosphoserine. Positions 34 to 48 are enriched in polar residues; it reads PTTGTYQLSPFSSPR. A disordered region spans residues 34–80; the sequence is PTTGTYQLSPFSSPRTPKEQEHRDGPSNGTRKWSVLSSPARQDSTVK. A compositionally biased stretch (basic and acidic residues) spans 49-58; sequence TPKEQEHRDG. A compositionally biased stretch (polar residues) spans 60 to 80; that stretch reads SNGTRKWSVLSSPARQDSTVK. The short motif at 63–66 is the Nuclear localization signal element; the sequence is TRKW. Residue S71 is modified to Phosphoserine. Residues 82 to 112 adopt a coiled-coil conformation; sequence SDGFMMLLSKIERSSEKTMEIMKNLSSLQAL. The LXXLL motif signature appears at 118 to 122; it reads LEDLL. Residues 171 to 175 carry the LXXIL motif motif; it reads LKAIL.

In terms of assembly, homodimer; mediated by the coiled coil domain. Interacts with CCNA2 and MTA1. Interacts with NFKB1 NF-kappa-B subunit. Component of the CENPA-CAD complex, composed of CENPI, CENPK, CENPL, CENPO, CENPP, CENPQ, CENPR and CENPS. The CENPA-CAD complex interacts with the CENPA-NAC complex, at least composed of CENPA, CENPC, CENPH, CENPM, CENPN, CENPT and CENPU. Interacts with TASOR.

It is found in the nucleus. The protein localises to the chromosome. Its subcellular location is the centromere. The protein resides in the kinetochore. In terms of biological role, transcription coregulator that can have both coactivator and corepressor functions. Involved in the coactivation of nuclear receptors for retinoid X (RXRs) and thyroid hormone (TRs) in a ligand-dependent fashion. In contrast, it does not coactivate nuclear receptors for retinoic acid, vitamin D, progesterone receptor, nor glucocorticoid. Acts as a coactivator for estrogen receptor alpha. Acts as a transcriptional corepressor via its interaction with the NFKB1 NF-kappa-B subunit, possibly by interfering with the transactivation domain of NFKB1. Induces apoptosis in breast cancer cells, but not in other cancer cells, via a caspase-2 mediated pathway that involves mitochondrial membrane permeabilization but does not require other caspases. May also act as an inhibitor of cyclin A-associated kinase. Also acts a component of the CENPA-CAD (nucleosome distal) complex, a complex recruited to centromeres which is involved in assembly of kinetochore proteins, mitotic progression and chromosome segregation. May be involved in incorporation of newly synthesized CENPA into centromeres via its interaction with the CENPA-NAC complex. The polypeptide is Centromere protein R (Itgb3bp) (Rattus norvegicus (Rat)).